Here is a 201-residue protein sequence, read N- to C-terminus: Large ribosomal subunit protein uL4 (201 aa).

Residues 42-67 (GNSAQKTRSEVSGGGKKPWNQKGTGR) are disordered.

It belongs to the universal ribosomal protein uL4 family. In terms of assembly, part of the 50S ribosomal subunit.

Its function is as follows. One of the primary rRNA binding proteins, this protein initially binds near the 5'-end of the 23S rRNA. It is important during the early stages of 50S assembly. It makes multiple contacts with different domains of the 23S rRNA in the assembled 50S subunit and ribosome. Forms part of the polypeptide exit tunnel. The chain is Large ribosomal subunit protein uL4 from Legionella pneumophila (strain Lens).